Reading from the N-terminus, the 414-residue chain is BICD family-like cargo adapter 2 (414 aa).

Positions 34–341 form a coiled coil; it reads GQALLEKNEE…DALNQQLLNT (308 aa). Positions 372–384 are enriched in basic and acidic residues; it reads QEKEKENNKERTG. The interval 372 to 399 is disordered; the sequence is QEKEKENNKERTGFQRGTRTTKSLRLRG.

The sequence is that of BICD family-like cargo adapter 2 (bicdl2) from Danio rerio (Zebrafish).